Reading from the N-terminus, the 142-residue chain is Hemoglobin subunit alpha-A (142 aa).

In terms of domain architecture, Globin spans Val-2–Arg-142. An O2-binding site is contributed by His-59. His-88 provides a ligand contact to heme b.

The protein belongs to the globin family. As to quaternary structure, heterotetramer of two alpha chains and two beta chains. As to expression, red blood cells.

Its function is as follows. Involved in oxygen transport from the lung to the various peripheral tissues. In Mareca penelope (Eurasian wigeon), this protein is Hemoglobin subunit alpha-A (HBAA).